The primary structure comprises 497 residues: UPF0371 protein cu0538 (497 aa).

It belongs to the UPF0371 family.

This Corynebacterium urealyticum (strain ATCC 43042 / DSM 7109) protein is UPF0371 protein cu0538.